Here is a 340-residue protein sequence, read N- to C-terminus: Phosphate acyltransferase (340 aa).

This sequence belongs to the PlsX family. In terms of assembly, homodimer. Probably interacts with PlsY.

Its subcellular location is the cytoplasm. It catalyses the reaction a fatty acyl-[ACP] + phosphate = an acyl phosphate + holo-[ACP]. It participates in lipid metabolism; phospholipid metabolism. Catalyzes the reversible formation of acyl-phosphate (acyl-PO(4)) from acyl-[acyl-carrier-protein] (acyl-ACP). This enzyme utilizes acyl-ACP as fatty acyl donor, but not acyl-CoA. This Leptospira biflexa serovar Patoc (strain Patoc 1 / ATCC 23582 / Paris) protein is Phosphate acyltransferase.